Reading from the N-terminus, the 2335-residue chain is tRNA3(Ser)-specific nuclease WapA (2335 aa).

The first 32 residues, 1–32 (MKKRKRRTFKRFIAAFLVLSLMISLLPADVLA), serve as a signal peptide directing secretion. The disordered stretch occupies residues 36-81 (EEEAGNRIVSDDPEETPRNEQTEEAVPFPSKDINKEGEITSERTEN). The span at 67 to 81 (DINKEGEITSERTEN) shows a compositional bias: basic and acidic residues. YD repeat units follow at residues 1032-1065 (YNDK…ITGP), 1076-1103 (SDLL…LVKQ), 1678-1716 (YDKE…PLGN), 1898-1935 (YDAN…DGTV), and 2082-2113 (YNAH…PTKT). Basic residues-rich tracts occupy residues 2251–2260 (KKDHGPKSKA) and 2269–2281 (SKFR…RRTT). Residues 2251-2285 (KKDHGPKSKARMPNGQPKSKFRSAKTLRRTTKATA) are disordered.

It belongs to the RHS/WapA nuclease family.

It localises to the secreted. The protein resides in the cell wall. Functionally, toxic component of a toxin-immunity protein module, which functions as a cellular contact-dependent growth inhibition (CDI) system. A site-specific tRNA3(Ser) nuclease, the C-terminus (residues 2201-2335) probably removes 2 or 4 nucleotides from the 3' end of tRNA3(Ser) but not tRNA2(Arg) or tRNA(Glu) (upon expression in E.coli), possibly endonucleolytically. The nuclease activity is neutralized by expression of the cognate immunity protein WapI from the same strain, but not its homolog from 2 other B.subtilis strains. The C-terminus cannot be expressed on its own in E.coli, however it can be cloned in the presence of its cognate immunity protein gene wapI. Cell contact is probably necessary for growth inhibition. In Bacillus spizizenii (strain DSM 15029 / JCM 12233 / NBRC 101239 / NRRL B-23049 / TU-B-10) (Bacillus subtilis subsp. spizizenii), this protein is tRNA3(Ser)-specific nuclease WapA (wapA).